Here is an 883-residue protein sequence, read N- to C-terminus: 3-hydroxy-3-methylglutaryl-coenzyme A reductase (883 aa).

Over 1–9 the chain is Cytoplasmic; it reads MLSRLFRMH. A helical transmembrane segment spans residues 10–39; that stretch reads GQFVASHPWEVIVGTVTLTICMMSMNMFTG. At 40–56 the chain is on the lumenal side; sequence NDKICGWNYACPKFEED. The helical transmembrane segment at 57-78 threads the bilayer; sequence VLSSDIIILTITRCIAILYIYF. Residues 79 to 89 lie on the Cytoplasmic side of the membrane; sequence QFQNLRQLGSK. A helical transmembrane segment spans residues 90-114; the sequence is YILGIAGLFTIFSSFVFSTVVIHFL. Residues 115-123 are Lumenal-facing; sequence DKELTGLNE. A helical transmembrane segment spans residues 124-149; that stretch reads ALPFFLLLIDLSKASALAKFALSSNS. Residues 150–159 lie on the Cytoplasmic side of the membrane; the sequence is QDEVRDNIAR. The chain crosses the membrane as a helical span at residues 160–187; it reads GMAILGPTFTLEALVECLVIGVGTMSGV. Topologically, residues 188-191 are lumenal; sequence RQLE. The chain crosses the membrane as a helical span at residues 192–220; sequence IMCCFGCMSVLANYFAFMTFFPACVSLVL. Residues 221-249 are Cytoplasmic-facing; it reads ELSRESREGRPIWQLSQFASVLEEEEDNK. A helical transmembrane segment spans residues 250–276; sequence PNPVTQRVKMIMSLGLVLVHAHSRWIS. Residues 277 to 316 are Lumenal-facing; sequence EPSSQNSTSISDHEVTTMLDDMMPKRVEPSMPLWQFYLSR. Asn282 is a glycosylation site (N-linked (GlcNAc...) asparagine). The helical transmembrane segment at 317–341 threads the bilayer; sequence MVTMDVEQIITLGLALLLAVKYIFF. At 342-883 the chain is on the cytoplasmic side; the sequence is EQTETESTFS…LPGTCTKKAA (542 aa). Positions 373–396 are disordered; sequence REPEQEKTVHVSTTEEASSKEETE. Catalysis depends on charge relay system residues Glu554, Lys686, and Asp762. Residue His861 is the Proton donor of the active site.

This sequence belongs to the HMG-CoA reductase family. Homotetramer. Homodimer.

The protein resides in the endoplasmic reticulum membrane. The protein localises to the peroxisome membrane. It carries out the reaction (R)-mevalonate + 2 NADP(+) + CoA = (3S)-3-hydroxy-3-methylglutaryl-CoA + 2 NADPH + 2 H(+). Its pathway is metabolic intermediate biosynthesis; (R)-mevalonate biosynthesis; (R)-mevalonate from acetyl-CoA: step 3/3. Its function is as follows. Catalyzes the conversion of (3S)-hydroxy-3-methylglutaryl-CoA (HMG-CoA) to mevalonic acid, the rate-limiting step in the synthesis of cholesterol and other isoprenoids, thus plays a critical role in cellular cholesterol homeostasis. This is 3-hydroxy-3-methylglutaryl-coenzyme A reductase (hmgcr) from Xenopus laevis (African clawed frog).